We begin with the raw amino-acid sequence, 488 residues long: Zinc finger protein 92 (488 aa).

Residues Val14 to Ser85 enclose the KRAB domain. 6 consecutive C2H2-type zinc fingers follow at residues Tyr141–His163, Tyr169–His191, Tyr197–His219, Phe225–His247, Phe253–His275, and Tyr281–His303. Residues Phe309–His331 form a C2H2-type 7; degenerate zinc finger. The segment at Tyr337–His359 adopts a C2H2-type 8 zinc-finger fold. Residues Gln387–Lys408 are disordered. The C2H2-type 9 zinc-finger motif lies at Gln410–His432. The tract at residues Glu435–Pro488 is disordered.

Belongs to the krueppel C2H2-type zinc-finger protein family. As to expression, highly expressed in pancreatic islets.

The protein localises to the nucleus. Functionally, KRAB domain-containing zinc-finger protein that represses B1/Alu SINE transposable elements and modulates the transcription of nearby genes in a tissue-specific manner. It regulates glucose homeostasis and lipid metabolism by modulating the expression of the endocrine cell-defining transcription factor, MAFB, in pancreatic islets and, the fat metabolism regulator, ACACB, in adipose tissue and muscle. In Mus musculus (Mouse), this protein is Zinc finger protein 92 (Zfp92).